We begin with the raw amino-acid sequence, 333 residues long: Serine racemase (333 aa).

Mg(2+) is bound at residue Glu13. ATP-binding residues include Ser31, Ser32, Ile33, Lys51, and Thr52. The active-site Proton acceptor is the Lys56. At Lys56 the chain carries N6-(pyridoxal phosphate)lysine. A Ca(2+)-binding site is contributed by Pro69. At Thr71 the chain carries Phosphothreonine. Thr81 contributes to the Ca(2+) binding site. Ser84 acts as the Proton acceptor in catalysis. Asn86 provides a ligand contact to pyridoxal 5'-phosphate. Gln89 is a binding site for ATP. Residue Cys113 is modified to S-nitrosocysteine. Tyr121 is a binding site for ATP. Asn154 contacts pyridoxal 5'-phosphate. A Mg(2+)-binding site is contributed by Asp178. Pyridoxal 5'-phosphate contacts are provided by Gly185, Gly186, Gly187, Gly188, and Met189. Residues Glu210, Ala214, Asp216, and Asn247 each coordinate Mg(2+). The Ca(2+) site is built by Glu210, Ala214, Asp216, and Asn247. Positions 210, 214, and 216 each coordinate Mn(2+). Residue Lys279 coordinates ATP. Position 313 (Ser313) interacts with pyridoxal 5'-phosphate. Residue Asn316 coordinates ATP.

It belongs to the serine/threonine dehydratase family. As to quaternary structure, homodimer. Requires Mg(2+) as cofactor. Mn(2+) serves as cofactor. The cofactor is Ca(2+). It depends on pyridoxal 5'-phosphate as a cofactor. S-nitrosylated, leading to decrease the enzyme activity. Expressed in the cerebellum and frontal cortex (at protein level).

It carries out the reaction L-serine = D-serine. The enzyme catalyses D-serine = pyruvate + NH4(+). The catalysed reaction is L-serine = pyruvate + NH4(+). Its activity is regulated as follows. Allosterically activated by magnesium, and possibly also other divalent metal cations. Allosterically activated by ATP, ADP or GTP. Competitively inhibited by malonate. Its function is as follows. Catalyzes the synthesis of D-serine from L-serine. D-serine is a key coagonist with glutamate at NMDA receptors. Has dehydratase activity towards both L-serine and D-serine. This Rattus norvegicus (Rat) protein is Serine racemase (Srr).